We begin with the raw amino-acid sequence, 209 residues long: uncharacterized protein (209 aa).

In terms of domain architecture, Nudix hydrolase spans 1–167; the sequence is MRNSAGLFMI…LNTYASSNYG (167 aa).

This is an uncharacterized protein from Orgyia pseudotsugata (Douglas-fir tussock moth).